We begin with the raw amino-acid sequence, 257 residues long: Zinc transporter ZupT (257 aa).

A run of 3 helical transmembrane segments spans residues 5–25 (LILTILAGAATFIGAFLGVLG), 32–52 (LLAFSLGFAAGIMLLISLMEM), and 61–81 (GMSPVLGYGMFIFGLLGYFGL). Fe(2+) contacts are provided by N120 and E123. Residues E123 and H148 each coordinate Zn(2+). Transmembrane regions (helical) follow at residues 137-157 (LGFGIALAVALHNIPEGLAVA), 171-191 (ILWAGISGLAEILGGVLAWLI), 195-215 (MISPVVMAAIMAAVAGIMVAL), and 236-256 (GVLCGMSVMGFSLVLLQTVGI). 3 residues coordinate Fe(2+): N149, E152, and E181. E152 is a binding site for Zn(2+).

Belongs to the ZIP transporter (TC 2.A.5) family. ZupT subfamily.

The protein localises to the cell inner membrane. The enzyme catalyses Zn(2+)(in) = Zn(2+)(out). Functionally, mediates zinc uptake. May also transport other divalent cations. This Escherichia coli O81 (strain ED1a) protein is Zinc transporter ZupT.